Here is a 471-residue protein sequence, read N- to C-terminus: MSKKYDAGVKEYRDTYWTPEYVPLDTDLLACFKCTGQEGVPREEVAAAVAAESSTGTWSTVWSELLTDLEFYKGRCYRIEDVPGDPEAFYAFIAYPLDLFEEGSITNVLTSLVGNVFGFKALRHLRLEDIRFPIAFIKTCGGPPNGIVVERDRLNKYGRPLLGCTIKPKLGLSGKNYGRVVYECLRGGLDLTKDDENINSQPFQRWRERFEFVAEAVKLAQQETGEVKGHYLNCTANTPEELYERAEFAKELDMPIIMHDYITGGFTANTGLANWCRKNGMLLHIHRAMHAVIDRHPKHGIHFRVLAKCLRLSGGDQLHTGTVVGKLEGDRQTTLGYIDNLRESFVPEDRSRGNFFDQDWGSMPGVFAVASGGIHVWHMPALLAIFGDDSCLQFGGGTHGHPWGSAAGAAANRVALEACVKARNAGREIEKESRDILMEAAKHSPELAIALETWKEIKFEFDTVDKLDVQG.

Positions 115 and 165 each coordinate substrate. Catalysis depends on Lys-167, which acts as the Proton acceptor. A substrate-binding site is contributed by Lys-169. Residues Lys-193, Asp-195, and Glu-196 each coordinate Mg(2+). N6-carboxylysine is present on Lys-193. His-286 (proton acceptor) is an active-site residue. Substrate is bound by residues Arg-287, His-319, and Ser-371.

This sequence belongs to the RuBisCO large chain family. Type I subfamily. In terms of assembly, heterohexadecamer of 8 large chains and 8 small chains. Mg(2+) serves as cofactor.

The protein resides in the carboxysome. The enzyme catalyses 2 (2R)-3-phosphoglycerate + 2 H(+) = D-ribulose 1,5-bisphosphate + CO2 + H2O. It carries out the reaction D-ribulose 1,5-bisphosphate + O2 = 2-phosphoglycolate + (2R)-3-phosphoglycerate + 2 H(+). Functionally, ruBisCO catalyzes two reactions: the carboxylation of D-ribulose 1,5-bisphosphate, the primary event in carbon dioxide fixation, as well as the oxidative fragmentation of the pentose substrate in the photorespiration process. Both reactions occur simultaneously and in competition at the same active site. This Prochlorococcus marinus (strain MIT 9515) protein is Ribulose bisphosphate carboxylase large chain.